A 590-amino-acid chain; its full sequence is 2-isopropylmalate synthase (590 aa).

Residues 40 to 314 (PRWCAVDLRD…DPQIDFSDID (275 aa)) form the Pyruvate carboxyltransferase domain. Mg(2+) is bound by residues aspartate 49, histidine 253, histidine 255, and asparagine 289. A regulatory domain region spans residues 456-590 (APETESDAKW…SSVPAELAGV (135 aa)).

This sequence belongs to the alpha-IPM synthase/homocitrate synthase family. LeuA type 2 subfamily. In terms of assembly, homodimer. Mg(2+) is required as a cofactor.

Its subcellular location is the cytoplasm. It catalyses the reaction 3-methyl-2-oxobutanoate + acetyl-CoA + H2O = (2S)-2-isopropylmalate + CoA + H(+). The protein operates within amino-acid biosynthesis; L-leucine biosynthesis; L-leucine from 3-methyl-2-oxobutanoate: step 1/4. Its function is as follows. Catalyzes the condensation of the acetyl group of acetyl-CoA with 3-methyl-2-oxobutanoate (2-ketoisovalerate) to form 3-carboxy-3-hydroxy-4-methylpentanoate (2-isopropylmalate). This is 2-isopropylmalate synthase from Leifsonia xyli subsp. xyli (strain CTCB07).